We begin with the raw amino-acid sequence, 265 residues long: HTH-type transcriptional activator CfaD (265 aa).

Residues 164–261 (DKVRNVIEKD…GVTPKQFFTY (98 aa)) enclose the HTH araC/xylS-type domain. 2 consecutive DNA-binding regions (H-T-H motif) follow at residues 181 to 202 (GIIA…ESEN) and 228 to 251 (ISQI…NKHY).

In terms of assembly, homodimer.

Functionally, transcriptional activator of the CFA/I adhesin (cfaA and cfaB) genes of enterotoxigenic E.coli at 37 degrees Celsius. Also represses the silencing effect of H-NS (hns). This chain is HTH-type transcriptional activator CfaD, found in Escherichia coli.